The following is a 478-amino-acid chain: Glutamate-1-semialdehyde 2,1-aminomutase, chloroplastic (478 aa).

The N-terminal 40 residues, 1-40 (MAGAAAASAAAAAVASGISARPVAPRPSPSRARAPRSVVR), are a transit peptide targeting the chloroplast. The segment at 15–36 (ASGISARPVAPRPSPSRARAPR) is disordered. K318 is modified (N6-(pyridoxal phosphate)lysine).

Belongs to the class-III pyridoxal-phosphate-dependent aminotransferase family. HemL subfamily. Homodimer. It depends on pyridoxal 5'-phosphate as a cofactor.

It localises to the plastid. The protein resides in the chloroplast. It carries out the reaction (S)-4-amino-5-oxopentanoate = 5-aminolevulinate. Its pathway is porphyrin-containing compound metabolism; protoporphyrin-IX biosynthesis; 5-aminolevulinate from L-glutamyl-tRNA(Glu): step 2/2. It functions in the pathway porphyrin-containing compound metabolism; chlorophyll biosynthesis. In Oryza sativa subsp. japonica (Rice), this protein is Glutamate-1-semialdehyde 2,1-aminomutase, chloroplastic (GSA).